The sequence spans 885 residues: Leucine--tRNA ligase (885 aa).

The 'HIGH' region signature appears at 53–63 (PYPSGKLHMGH). The 'KMSKS' region signature appears at 631–635 (KMSKS). K634 is an ATP binding site.

It belongs to the class-I aminoacyl-tRNA synthetase family.

The protein resides in the cytoplasm. It catalyses the reaction tRNA(Leu) + L-leucine + ATP = L-leucyl-tRNA(Leu) + AMP + diphosphate. This chain is Leucine--tRNA ligase, found in Psychrobacter sp. (strain PRwf-1).